A 362-amino-acid chain; its full sequence is 3-dehydroquinate synthase (362 aa).

NAD(+) is bound by residues 71-76 (DGEQYK), 105-109 (GVVGD), 129-130 (TT), Lys142, Lys151, and 169-172 (CLKT). Zn(2+) contacts are provided by Glu184, His247, and His264.

It belongs to the sugar phosphate cyclases superfamily. Dehydroquinate synthase family. Requires NAD(+) as cofactor. Co(2+) is required as a cofactor. The cofactor is Zn(2+).

The protein resides in the cytoplasm. It carries out the reaction 7-phospho-2-dehydro-3-deoxy-D-arabino-heptonate = 3-dehydroquinate + phosphate. It participates in metabolic intermediate biosynthesis; chorismate biosynthesis; chorismate from D-erythrose 4-phosphate and phosphoenolpyruvate: step 2/7. Catalyzes the conversion of 3-deoxy-D-arabino-heptulosonate 7-phosphate (DAHP) to dehydroquinate (DHQ). The protein is 3-dehydroquinate synthase of Shigella flexneri.